Reading from the N-terminus, the 329-residue chain is Dapdiamide synthesis protein DdaC (329 aa).

Requires Fe(2+) as cofactor.

The protein operates within antibiotic biosynthesis. Involved in dapdiamide antibiotics biosynthesis. Catalyzes the alpha-ketoglutarate-dependent epoxidation of the covalently bound N-beta-fumaramoyl-DAP-S-DdaD to generate N-beta-epoxysuccinamoyl-DAP in thioester linkage to DdaD. The chain is Dapdiamide synthesis protein DdaC from Enterobacter agglomerans (Erwinia herbicola).